A 1744-amino-acid polypeptide reads, in one-letter code: Transcription initiation factor TFIID subunit 1 (1744 aa).

Disordered stretches follow at residues methionine 1–glutamate 65, valine 248–serine 275, proline 429–proline 488, glutamine 1001–asparagine 1024, threonine 1071–glycine 1098, and methionine 1186–proline 1213. Polar residues predominate over residues alanine 43–serine 52. Residues valine 55–asparagine 64 show a composition bias toward basic and acidic residues. Over residues proline 429 to aspartate 439 the composition is skewed to basic and acidic residues. Basic residues predominate over residues histidine 440 to lysine 449. Residues glutamate 477–proline 488 are compositionally biased toward polar residues. Over residues serine 1012–asparagine 1024 the composition is skewed to acidic residues. Coiled-coil stretches lie at residues aspartate 1019–lysine 1080, tyrosine 1161–lysine 1204, and asparagine 1282–alanine 1314. Composition is skewed to basic and acidic residues over residues glutamate 1076–serine 1093 and methionine 1186–valine 1205. Residues tyrosine 1319–isoleucine 1344 show a composition bias toward gly residues. The interval tyrosine 1319–glutamate 1391 is disordered. Polar residues predominate over residues serine 1354 to leucine 1363. Positions glycine 1372–glycine 1381 are enriched in low complexity. The Nuclear localization signal motif lies at valine 1379–serine 1386. Bromo domains are found at residues arginine 1404–arginine 1512 and tyrosine 1537–glutamine 1634. Positions aspartate 1666–isoleucine 1694 are enriched in acidic residues. Disordered stretches follow at residues aspartate 1666–aspartate 1702 and asparagine 1714–phenylalanine 1744.

The protein belongs to the TAF1 family. As to quaternary structure, component of the TFIID basal transcription factor complex, composed of TATA-box-binding protein tbp-1, and a number of TBP-associated factors (TAFs).

Its subcellular location is the nucleus. In terms of biological role, the TFIID basal transcription factor complex plays a major role in the initiation of RNA polymerase II (Pol II)-dependent transcription. TFIID recognizes and binds promoters via its subunit tbp-1, a TATA-box-binding protein, and promotes assembly of the pre-initiation complex (PIC). The TFIID complex consists of tbp-1 and TBP-associated factors (TAFs), including taf-1. May regulate RNA polymerase II activity and thereby may control transcription initiation by RNA polymerase II. Required for early embryonic development. Essential for embryonic transcription of several genes. This Caenorhabditis elegans protein is Transcription initiation factor TFIID subunit 1.